The sequence spans 333 residues: L-lactate dehydrogenase A chain (333 aa).

NAD(+) is bound by residues 30–58 (GMVGMAAAISILLKDLTDELALVDVMEDK) and Arg-100. Residues Arg-107, Asn-139, and Arg-170 each contribute to the substrate site. Asn-139 provides a ligand contact to NAD(+). His-194 (proton acceptor) is an active-site residue. Thr-249 is a substrate binding site.

The protein belongs to the LDH/MDH superfamily. LDH family. In terms of assembly, homotetramer.

The protein resides in the cytoplasm. It carries out the reaction (S)-lactate + NAD(+) = pyruvate + NADH + H(+). It participates in fermentation; pyruvate fermentation to lactate; (S)-lactate from pyruvate: step 1/1. This chain is L-lactate dehydrogenase A chain (ldha), found in Cyprinus carpio (Common carp).